Consider the following 98-residue polypeptide: RNA-binding protein Hfq (98 aa).

The region spanning 11-71 (DVFLNHVRRS…ISTVMPATPV (61 aa)) is the Sm domain.

It belongs to the Hfq family. As to quaternary structure, homohexamer.

In terms of biological role, RNA chaperone that binds small regulatory RNA (sRNAs) and mRNAs to facilitate mRNA translational regulation in response to envelope stress, environmental stress and changes in metabolite concentrations. Also binds with high specificity to tRNAs. The chain is RNA-binding protein Hfq from Gluconacetobacter diazotrophicus (strain ATCC 49037 / DSM 5601 / CCUG 37298 / CIP 103539 / LMG 7603 / PAl5).